The following is a 108-amino-acid chain: MADPRVRQIKIKTGVVKRLVKEKMMYEKEAKQQEEKIEKMKAEDGENYAIKKQAEILQESRMMIPDCQRRLEAAHTDLLQLLESEKDLEEAEEYKEARLVLDSVKLEA.

Residue Ala2 is modified to N-acetylalanine.

The protein belongs to the TBCA family. As to quaternary structure, supercomplex made of cofactors A to E. Cofactors A and D function by capturing and stabilizing tubulin in a quasi-native conformation. Cofactor E binds to the cofactor D-tubulin complex; interaction with cofactor C then causes the release of tubulin polypeptides that are committed to the native state. Widely expressed, but is most abundant in the testis.

It is found in the cytoplasm. It localises to the cytoskeleton. Functionally, tubulin-folding protein; involved in the early step of the tubulin folding pathway. This Bos taurus (Bovine) protein is Tubulin-specific chaperone A (TBCA).